A 559-amino-acid chain; its full sequence is Glycerol kinase (559 aa).

An ADP-binding site is contributed by threonine 20. ATP is bound by residues threonine 20, serine 21, and serine 22. Residue threonine 20 coordinates sn-glycerol 3-phosphate. Arginine 24 serves as a coordination point for ADP. Sn-glycerol 3-phosphate is bound by residues arginine 94, glutamate 95, and tyrosine 148. Residues arginine 94, glutamate 95, and tyrosine 148 each coordinate glycerol. Glycine 252 is a beta-D-fructose 1,6-bisphosphate binding site. Residue aspartate 265 coordinates sn-glycerol 3-phosphate. 2 residues coordinate glycerol: aspartate 265 and glutamine 266. The ADP site is built by threonine 287, glycine 332, glycine 433, and asparagine 437. ATP-binding residues include threonine 287, glycine 332, and glycine 433. A helical transmembrane segment spans residues 532-552; sequence IFCSLPLGFFIVSSMVMLIGA.

The protein belongs to the FGGY kinase family. Widely expressed in fetal and adult tissues. As to expression, the sole isoform expressed in adult liver and kidney.

It localises to the mitochondrion outer membrane. The protein resides in the nucleus. The protein localises to the cytoplasm. Its subcellular location is the cytosol. The catalysed reaction is glycerol + ATP = sn-glycerol 3-phosphate + ADP + H(+). It participates in polyol metabolism; glycerol degradation via glycerol kinase pathway; sn-glycerol 3-phosphate from glycerol: step 1/1. With respect to regulation, potassium and magnesium-dependent. Its function is as follows. Kinase that plays a key role in glycerol metabolism, catalyzing its phosphorylation to produce sn-glycerol 3-phosphate. Sn-glycerol 3-phosphate is a crucial intermediate in various metabolic pathways, such as the synthesis of glycerolipids and triglycerides, glycogenesis, glycolysis and gluconeogenesis. This chain is Glycerol kinase, found in Homo sapiens (Human).